We begin with the raw amino-acid sequence, 109 residues long: Nucleoid-associated protein CGSHiEE_00780 (109 aa).

It belongs to the YbaB/EbfC family. In terms of assembly, homodimer.

Its subcellular location is the cytoplasm. It is found in the nucleoid. Binds to DNA and alters its conformation. May be involved in regulation of gene expression, nucleoid organization and DNA protection. This Haemophilus influenzae (strain PittEE) protein is Nucleoid-associated protein CGSHiEE_00780.